A 54-amino-acid chain; its full sequence is Ovomucoid (54 aa).

The 51-residue stretch at 4 to 54 (VDCSDYPKPVCSLEDMPLCGSDSKTYSNKCNFCNAVVDSNGTLTLSHFGKC) folds into the Kazal-like domain. 3 disulfides stabilise this stretch: Cys-6–Cys-36, Cys-14–Cys-33, and Cys-22–Cys-54. A glycan (N-linked (GlcNAc...) asparagine) is linked at Asn-43.

Its subcellular location is the secreted. The sequence is that of Ovomucoid from Vultur gryphus (Andean condor).